Here is a 327-residue protein sequence, read N- to C-terminus: Interleukin-12 subunit beta (327 aa).

The first 22 residues, 1-22, serve as a signal peptide directing secretion; that stretch reads MCHQKLTISWFAMVLLVSPLMA. The Ig-like C2-type domain maps to 23–106; the sequence is IWELEKDVYV…LSHSRLLLHK (84 aa). Cysteines 50 and 90 form a disulfide. Asparagine 125, asparagine 135, asparagine 223, and asparagine 315 each carry an N-linked (GlcNAc...) asparagine glycan. The Fibronectin type-III domain maps to 238-327; sequence PPKNLQLKPL…WSEWASVSCN (90 aa).

The protein belongs to the IL-12B family. As to quaternary structure, heterodimer with IL12A; disulfide-linked. The heterodimer is known as interleukin IL-12. Heterodimer with IL23A; disulfide-linked. The heterodimer is known as interleukin IL-23. Also secreted as a monomer. Interacts with NBR1; this interaction promotes IL-12 secretion.

It localises to the secreted. Cytokine that can act as a growth factor for activated T and NK cells, enhance the lytic activity of NK/lymphokine-activated killer cells, and stimulate the production of IFN-gamma by resting PBMC. Its function is as follows. Associates with IL23A to form the IL-23 interleukin, a heterodimeric cytokine which functions in innate and adaptive immunity. IL-23 may constitute with IL-17 an acute response to infection in peripheral tissues. IL-23 binds to a heterodimeric receptor complex composed of IL12RB1 and IL23R, activates the Jak-Stat signaling cascade, stimulates memory rather than naive T-cells and promotes production of pro-inflammatory cytokines. IL-23 induces autoimmune inflammation and thus may be responsible for autoimmune inflammatory diseases and may be important for tumorigenesis. In Sigmodon hispidus (Hispid cotton rat), this protein is Interleukin-12 subunit beta (IL12B).